The sequence spans 340 residues: tRNA N6-adenosine threonylcarbamoyltransferase (340 aa).

2 residues coordinate Fe cation: H114 and H118. Residues 140 to 144 (TISGG), D173, G186, D190, and N281 contribute to the substrate site. D309 provides a ligand contact to Fe cation.

It belongs to the KAE1 / TsaD family. It depends on Fe(2+) as a cofactor.

Its subcellular location is the cytoplasm. It catalyses the reaction L-threonylcarbamoyladenylate + adenosine(37) in tRNA = N(6)-L-threonylcarbamoyladenosine(37) in tRNA + AMP + H(+). Functionally, required for the formation of a threonylcarbamoyl group on adenosine at position 37 (t(6)A37) in tRNAs that read codons beginning with adenine. Is involved in the transfer of the threonylcarbamoyl moiety of threonylcarbamoyl-AMP (TC-AMP) to the N6 group of A37, together with TsaE and TsaB. TsaD likely plays a direct catalytic role in this reaction. This is tRNA N6-adenosine threonylcarbamoyltransferase from Christiangramia forsetii (strain DSM 17595 / CGMCC 1.15422 / KT0803) (Gramella forsetii).